Here is a 400-residue protein sequence, read N- to C-terminus: Argininosuccinate synthase (400 aa).

ATP-binding positions include 10-18 and alanine 38; that span reads AYSGGVDTS. Tyrosine 89 is an L-citrulline binding site. Glycine 119 serves as a coordination point for ATP. The L-aspartate site is built by threonine 121, asparagine 125, and aspartate 126. Asparagine 125 is an L-citrulline binding site. Residues arginine 129, serine 177, serine 186, glutamate 262, and tyrosine 274 each coordinate L-citrulline.

The protein belongs to the argininosuccinate synthase family. Type 1 subfamily. As to quaternary structure, homotetramer.

It localises to the cytoplasm. It carries out the reaction L-citrulline + L-aspartate + ATP = 2-(N(omega)-L-arginino)succinate + AMP + diphosphate + H(+). It participates in amino-acid biosynthesis; L-arginine biosynthesis; L-arginine from L-ornithine and carbamoyl phosphate: step 2/3. In Crocosphaera subtropica (strain ATCC 51142 / BH68) (Cyanothece sp. (strain ATCC 51142)), this protein is Argininosuccinate synthase.